The following is a 140-amino-acid chain: Large ribosomal subunit protein uL16 (140 aa).

Residues 1–17 (MPLMPKRVKHRKMHRGS) are compositionally biased toward basic residues. The interval 1 to 21 (MPLMPKRVKHRKMHRGSRSGN) is disordered.

The protein belongs to the universal ribosomal protein uL16 family. Part of the 50S ribosomal subunit.

Binds 23S rRNA and is also seen to make contacts with the A and possibly P site tRNAs. The protein is Large ribosomal subunit protein uL16 of Akkermansia muciniphila (strain ATCC BAA-835 / DSM 22959 / JCM 33894 / BCRC 81048 / CCUG 64013 / CIP 107961 / Muc).